A 150-amino-acid chain; its full sequence is Large ribosomal subunit protein bL9 (150 aa).

Belongs to the bacterial ribosomal protein bL9 family.

Its function is as follows. Binds to the 23S rRNA. This Saccharopolyspora erythraea (strain ATCC 11635 / DSM 40517 / JCM 4748 / NBRC 13426 / NCIMB 8594 / NRRL 2338) protein is Large ribosomal subunit protein bL9.